We begin with the raw amino-acid sequence, 343 residues long: Methylthioribose-1-phosphate isomerase (343 aa).

Substrate is bound by residues Arg-48–Ala-50, Arg-88, and Gln-193. Residue Asp-234 is the Proton donor of the active site. Asn-244–Lys-245 lines the substrate pocket.

The protein belongs to the eIF-2B alpha/beta/delta subunits family. MtnA subfamily.

The catalysed reaction is 5-(methylsulfanyl)-alpha-D-ribose 1-phosphate = 5-(methylsulfanyl)-D-ribulose 1-phosphate. It functions in the pathway amino-acid biosynthesis; L-methionine biosynthesis via salvage pathway; L-methionine from S-methyl-5-thio-alpha-D-ribose 1-phosphate: step 1/6. Catalyzes the interconversion of methylthioribose-1-phosphate (MTR-1-P) into methylthioribulose-1-phosphate (MTRu-1-P). This Thermotoga neapolitana (strain ATCC 49049 / DSM 4359 / NBRC 107923 / NS-E) protein is Methylthioribose-1-phosphate isomerase.